Here is a 306-residue protein sequence, read N- to C-terminus: Flavin adenine dinucleotide synthase (306 aa).

Residues serine 59, isoleucine 107, glycine 164, 182 to 185 (DSNW), arginine 190, and arginine 300 each bind FAD.

This sequence belongs to the PAPS reductase family. FAD1 subfamily.

Its subcellular location is the cytoplasm. The catalysed reaction is FMN + ATP + H(+) = FAD + diphosphate. Its pathway is cofactor biosynthesis; FAD biosynthesis; FAD from FMN: step 1/1. In terms of biological role, catalyzes the adenylation of flavin mononucleotide (FMN) to form flavin adenine dinucleotide (FAD) coenzyme. The sequence is that of Flavin adenine dinucleotide synthase from Saccharomyces cerevisiae (strain ATCC 204508 / S288c) (Baker's yeast).